The chain runs to 478 residues: Alpha-1,3-mannosyl-glycoprotein 4-beta-N-acetylglucosaminyltransferase C (478 aa).

Residues 1–23 (MFKFHQMKHIFEILDKMRCLRKR) are Cytoplasmic-facing. The helical; Signal-anchor for type II membrane protein transmembrane segment at 24-44 (STVSFLGVLVIFLLFMNLYIE) threads the bilayer. At 45–478 (DSYVLEGDKQ…IIRSISIWTS (434 aa)) the chain is on the lumenal side. Residues asparagine 84 and asparagine 215 are each glycosylated (N-linked (GlcNAc...) asparagine).

This sequence belongs to the glycosyltransferase 54 family. The cofactor is a divalent metal cation.

The protein resides in the golgi apparatus membrane. The enzyme catalyses N(4)-{beta-D-GlcNAc-(1-&gt;2)-alpha-D-Man-(1-&gt;3)-[beta-D-GlcNAc-(1-&gt;2)-alpha-D-Man-(1-&gt;6)]-beta-D-Man-(1-&gt;4)-beta-D-GlcNAc-(1-&gt;4)-beta-D-GlcNAc}-L-asparaginyl-[protein] + UDP-N-acetyl-alpha-D-glucosamine = N(4)-{beta-D-GlcNAc-(1-&gt;2)-[beta-D-GlcNAc-(1-&gt;4)]-alpha-D-Man-(1-&gt;3)-[beta-D-GlcNAc-(1-&gt;2)-alpha-D-Man-(1-&gt;6)]-beta-D-Man-(1-&gt;4)-beta-D-GlcNAc-(1-&gt;4)-beta-D-GlcNAc}-L-asparaginyl-[protein] + UDP + H(+). Its pathway is protein modification; protein glycosylation. In terms of biological role, glycosyltransferase that participates in the transfer of N-acetylglucosamine (GlcNAc) to the core mannose residues of N-linked glycans. Catalyzes the formation of the GlcNAcbeta1-4 branch on the GlcNAcbeta1-2Manalpha1-3 arm of the core structure of N-linked glycans. Essential for the production of tri- and tetra-antennary N-linked sugar chains. Does not catalyze the transfer of GlcNAc to the Manalpha1-6 arm to form GlcNAcBeta1-4Manalpha1-6 linkage ('GnT-VI' activity). In Macaca fascicularis (Crab-eating macaque), this protein is Alpha-1,3-mannosyl-glycoprotein 4-beta-N-acetylglucosaminyltransferase C (MGAT4C).